Reading from the N-terminus, the 587-residue chain is NADH-quinone oxidoreductase subunit C/D (587 aa).

The NADH dehydrogenase I subunit C stretch occupies residues 1–178; the sequence is MAAPTTEHAE…EPFSLPDDVQ (178 aa). The interval 202 to 587 is NADH dehydrogenase I subunit D; that stretch reads DFLFLNLGPN…IDFVMADVDR (386 aa).

In the N-terminal section; belongs to the complex I 30 kDa subunit family. This sequence in the C-terminal section; belongs to the complex I 49 kDa subunit family. In terms of assembly, NDH-1 is composed of 13 different subunits. Subunits NuoB, CD, E, F, and G constitute the peripheral sector of the complex.

It localises to the cell inner membrane. It catalyses the reaction a quinone + NADH + 5 H(+)(in) = a quinol + NAD(+) + 4 H(+)(out). Its function is as follows. NDH-1 shuttles electrons from NADH, via FMN and iron-sulfur (Fe-S) centers, to quinones in the respiratory chain. The immediate electron acceptor for the enzyme in this species is believed to be ubiquinone. Couples the redox reaction to proton translocation (for every two electrons transferred, four hydrogen ions are translocated across the cytoplasmic membrane), and thus conserves the redox energy in a proton gradient. The chain is NADH-quinone oxidoreductase subunit C/D from Methylococcus capsulatus (strain ATCC 33009 / NCIMB 11132 / Bath).